Consider the following 338-residue polypeptide: Ketol-acid reductoisomerase (NADP(+)) (338 aa).

A KARI N-terminal Rossmann domain is found at 1-181 (MNVFYDKDAD…GGGRAGIIET (181 aa)). NADP(+) is bound by residues 24–27 (YGSQ), Arg47, and Ser52. Residue His107 is part of the active site. Position 133 (Gly133) interacts with NADP(+). The KARI C-terminal knotted domain occupies 182–327 (NFREETETDL…AKLRAMMPWI (146 aa)). 4 residues coordinate Mg(2+): Asp190, Glu194, Glu226, and Glu230. Position 251 (Ser251) interacts with substrate.

This sequence belongs to the ketol-acid reductoisomerase family. The cofactor is Mg(2+).

It carries out the reaction (2R)-2,3-dihydroxy-3-methylbutanoate + NADP(+) = (2S)-2-acetolactate + NADPH + H(+). The enzyme catalyses (2R,3R)-2,3-dihydroxy-3-methylpentanoate + NADP(+) = (S)-2-ethyl-2-hydroxy-3-oxobutanoate + NADPH + H(+). Its pathway is amino-acid biosynthesis; L-isoleucine biosynthesis; L-isoleucine from 2-oxobutanoate: step 2/4. It participates in amino-acid biosynthesis; L-valine biosynthesis; L-valine from pyruvate: step 2/4. Functionally, involved in the biosynthesis of branched-chain amino acids (BCAA). Catalyzes an alkyl-migration followed by a ketol-acid reduction of (S)-2-acetolactate (S2AL) to yield (R)-2,3-dihydroxy-isovalerate. In the isomerase reaction, S2AL is rearranged via a Mg-dependent methyl migration to produce 3-hydroxy-3-methyl-2-ketobutyrate (HMKB). In the reductase reaction, this 2-ketoacid undergoes a metal-dependent reduction by NADPH to yield (R)-2,3-dihydroxy-isovalerate. The sequence is that of Ketol-acid reductoisomerase (NADP(+)) from Burkholderia lata (strain ATCC 17760 / DSM 23089 / LMG 22485 / NCIMB 9086 / R18194 / 383).